We begin with the raw amino-acid sequence, 333 residues long: Transcription initiation factor IIB (333 aa).

The TFIIB-type zinc-finger motif lies at 33–64 (EVYRCPICGNDRFVYNYERGEIVCIVCGAVVQ). Positions 37, 40, 56, and 59 each coordinate Zn(2+). A run of 2 repeats spans residues 149 to 232 (QELE…LREL) and 243 to 324 (LYIS…ELAK).

Belongs to the TFIIB family.

Functionally, stabilizes TBP binding to an archaeal box-A promoter. Also responsible for recruiting RNA polymerase II to the pre-initiation complex (DNA-TBP-TFIIB). The protein is Transcription initiation factor IIB of Pyrobaculum islandicum (strain DSM 4184 / JCM 9189 / GEO3).